A 202-amino-acid polypeptide reads, in one-letter code: MIGRLRGTLAEKQPPHLILDVNGLGYELEVPMTTLYRLPSVGEPLTLHTHLVVREDAQLLYGFAGKRERDFFRELIRLNGVGPKLALALMSSLEVDELIRCVQSQDTSALTKVPGVGKKTAERLLVELKNRFKAWETSPAMFALVPNQPDGPAPVNTAENDAVSALISLGYKPQEASKAISAIKEKGLSSEDMIRRALKGMI.

Positions 1-64 (MIGRLRGTLA…EDAQLLYGFA (64 aa)) are domain I. The segment at 65–143 (GKRERDFFRE…AWETSPAMFA (79 aa)) is domain II. Positions 144 to 154 (LVPNQPDGPAP) are flexible linker. The interval 154–202 (PVNTAENDAVSALISLGYKPQEASKAISAIKEKGLSSEDMIRRALKGMI) is domain III.

It belongs to the RuvA family. In terms of assembly, homotetramer. Forms an RuvA(8)-RuvB(12)-Holliday junction (HJ) complex. HJ DNA is sandwiched between 2 RuvA tetramers; dsDNA enters through RuvA and exits via RuvB. An RuvB hexamer assembles on each DNA strand where it exits the tetramer. Each RuvB hexamer is contacted by two RuvA subunits (via domain III) on 2 adjacent RuvB subunits; this complex drives branch migration. In the full resolvosome a probable DNA-RuvA(4)-RuvB(12)-RuvC(2) complex forms which resolves the HJ.

Its subcellular location is the cytoplasm. The RuvA-RuvB-RuvC complex processes Holliday junction (HJ) DNA during genetic recombination and DNA repair, while the RuvA-RuvB complex plays an important role in the rescue of blocked DNA replication forks via replication fork reversal (RFR). RuvA specifically binds to HJ cruciform DNA, conferring on it an open structure. The RuvB hexamer acts as an ATP-dependent pump, pulling dsDNA into and through the RuvAB complex. HJ branch migration allows RuvC to scan DNA until it finds its consensus sequence, where it cleaves and resolves the cruciform DNA. The polypeptide is Holliday junction branch migration complex subunit RuvA (Pseudomonas fluorescens (strain Pf0-1)).